The following is a 138-amino-acid chain: Putative pre-16S rRNA nuclease (138 aa).

Belongs to the YqgF nuclease family.

It is found in the cytoplasm. Its function is as follows. Could be a nuclease involved in processing of the 5'-end of pre-16S rRNA. This is Putative pre-16S rRNA nuclease from Porphyromonas gingivalis (strain ATCC BAA-308 / W83).